Consider the following 70-residue polypeptide: uncharacterized protein (70 aa).

Residues 15-37 (LLVSSISESAVALIIITIRILFS) form a helical membrane-spanning segment.

It is found in the membrane. This is an uncharacterized protein from Saccharomyces cerevisiae (strain ATCC 204508 / S288c) (Baker's yeast).